We begin with the raw amino-acid sequence, 521 residues long: Amidase (521 aa).

Residues Lys-96 and Ser-171 each act as charge relay system in the active site. Residues 155-174 form a disordered region; sequence SGPVRNPWDRQREAGGSSGG. Ser-195 acts as the Acyl-ester intermediate in catalysis.

Belongs to the amidase family. Homodimer.

The enzyme catalyses a monocarboxylic acid amide + H2O = a monocarboxylate + NH4(+). Its function is as follows. Hydrolyzes propionamides efficiently, and also at a lower efficiency, acetamide, acrylamide and indoleacetamide. This enzyme seems to be stereospecific and can lead to the production of a single enantiomer. The sequence is that of Amidase (amdA) from Rhodococcus erythropolis (Arthrobacter picolinophilus).